We begin with the raw amino-acid sequence, 392 residues long: MQRITILGATGSIGESTLDVVRRHPDRYSVHALSAHRQVDKLAAACVEFRPARAVVGSAEAARELEAKLRAAGVPTEVSYGETALESIAEDAGTDAVMAAIVGAAGLRSSLAAARAGKRVLLANKESLVMSGGIFMDAVREHGATLLPIDSEHNAIFQCLPTSDPRYGAGVSKVLLTASGGPFRTRDPSTLHDITPDQACAHPKWVMGRKISVDSATMMNKGLEVIEAHWLFGAPAEKIEVLIHPQSIVHSMVAYADGSVLAQLGNPDMRTPIAYGMAYPERIDSGVTPLDLTVAGGLHFETPDLERFPCLGLAFDALRAGGVAPAVLNAANEVAVEAFLNGKIRFTDIARVVATVLEQPADGSADTLEGVLAADSAARRGAQAQLGSLAGR.

NADPH contacts are provided by Thr10, Gly11, Ser12, Ile13, Arg37, Gln38, and Asn124. Lys125 contributes to the 1-deoxy-D-xylulose 5-phosphate binding site. NADPH is bound at residue Glu126. Asp150 provides a ligand contact to Mn(2+). 4 residues coordinate 1-deoxy-D-xylulose 5-phosphate: Ser151, Glu152, Ser179, and His202. Glu152 lines the Mn(2+) pocket. An NADPH-binding site is contributed by Gly208. Residues Ser215, Asn220, Lys221, and Glu224 each coordinate 1-deoxy-D-xylulose 5-phosphate. Glu224 is a Mn(2+) binding site.

Belongs to the DXR family. Mg(2+) serves as cofactor. The cofactor is Mn(2+).

It carries out the reaction 2-C-methyl-D-erythritol 4-phosphate + NADP(+) = 1-deoxy-D-xylulose 5-phosphate + NADPH + H(+). The protein operates within isoprenoid biosynthesis; isopentenyl diphosphate biosynthesis via DXP pathway; isopentenyl diphosphate from 1-deoxy-D-xylulose 5-phosphate: step 1/6. In terms of biological role, catalyzes the NADPH-dependent rearrangement and reduction of 1-deoxy-D-xylulose-5-phosphate (DXP) to 2-C-methyl-D-erythritol 4-phosphate (MEP). This Cupriavidus metallidurans (strain ATCC 43123 / DSM 2839 / NBRC 102507 / CH34) (Ralstonia metallidurans) protein is 1-deoxy-D-xylulose 5-phosphate reductoisomerase.